The sequence spans 221 residues: Late protein I196L (221 aa).

3 repeat units span residues 28–48 (SNYL…PTTS), 49–69 (SNYS…PTTS), and 70–90 (SNYS…PTTS). Residues 91–112 (SNYSMTAIPNNISDKEDYTYFS) form a 4; approximate repeat.

It belongs to the asfivirus I196L family.

This African swine fever virus (isolate Tick/Malawi/Lil 20-1/1983) (ASFV) protein is Late protein I196L.